The chain runs to 206 residues: Adenylyl-sulfate kinase (206 aa).

An ATP-binding site is contributed by 31-38 (GLSASGKS). S105 (phosphoserine intermediate) is an active-site residue.

The protein belongs to the APS kinase family.

The catalysed reaction is adenosine 5'-phosphosulfate + ATP = 3'-phosphoadenylyl sulfate + ADP + H(+). It functions in the pathway sulfur metabolism; hydrogen sulfide biosynthesis; sulfite from sulfate: step 2/3. Catalyzes the synthesis of activated sulfate. This chain is Adenylyl-sulfate kinase (sD), found in Emericella nidulans (strain FGSC A4 / ATCC 38163 / CBS 112.46 / NRRL 194 / M139) (Aspergillus nidulans).